Here is a 302-residue protein sequence, read N- to C-terminus: Probable 2-(5''-triphosphoribosyl)-3'-dephosphocoenzyme-A synthase (302 aa).

It belongs to the CitG/MdcB family.

The enzyme catalyses 3'-dephospho-CoA + ATP = 2'-(5''-triphospho-alpha-D-ribosyl)-3'-dephospho-CoA + adenine. In Salmonella gallinarum (strain 287/91 / NCTC 13346), this protein is Probable 2-(5''-triphosphoribosyl)-3'-dephosphocoenzyme-A synthase.